Consider the following 328-residue polypeptide: Probable voltage-gated potassium channel subunit beta (328 aa).

The NADP(+) site is built by W21, Q27, and D49. Y54 (proton donor/acceptor) is an active-site residue. NADP(+) contacts are provided by S152, Q178, W207, S208, P209, L210, A211, K218, R229, G285, T287, Q291, E294, and N295.

Belongs to the shaker potassium channel beta subunit family. As to quaternary structure, forms heteromultimeric complexes with potassium channel alpha subunits. In terms of tissue distribution, expressed in roots, leaves and flowers (at protein level).

Its function is as follows. Probable accessory potassium channel protein which modulates the activity of the pore-forming alpha subunit. This chain is Probable voltage-gated potassium channel subunit beta (KAB1), found in Arabidopsis thaliana (Mouse-ear cress).